Reading from the N-terminus, the 525-residue chain is Transmembrane protein 184C (525 aa).

7 consecutive transmembrane segments (helical) span residues 17–37, 48–68, 83–103, 121–141, 212–232, 254–274, and 287–307; these read LLVLFYATTILVAVPICIWKF, SWFIAGIFLLLTIPVSLWGIL, IIRILWMVPIYSVDSWVALVY, VIYNFMIFLTNYLTIRFPNLI, YLVILNNLSQLFAMYCLLLFY, VVFVSFWQAVLIALLVKLGVI, and AVATGLQDFIICIEMFFAAIA. Disordered stretches follow at residues 358–394 and 483–525; these read PKKKCFPGDPDHNEHSSLLSSSSQDLTSGSSKVPSPG and LFPS…STDP. The span at 373–388 shows a compositional bias: low complexity; sequence SSLLSSSSQDLTSGSS. Residues 483 to 502 show a composition bias toward polar residues; the sequence is LFPSTETSENSMIDTSESQQ. The span at 503–525 shows a compositional bias: low complexity; the sequence is ESSDLCTESSDSSTESSDLSTDP.

This sequence belongs to the TMEM184 family.

Its subcellular location is the membrane. In terms of biological role, possible tumor suppressor which may play a role in cell growth. The protein is Transmembrane protein 184C (Tmem184c) of Mus musculus (Mouse).